Reading from the N-terminus, the 136-residue chain is Small cardioactive peptides (136 aa).

An N-terminal signal peptide occupies residues 1 to 24; sequence METSVSRVTVSLTLLVLIICSADA. Methionine amide occurs at positions 33 and 46. A propeptide spans 49–135 (carboxy-terminal peptide); sequence SQMKTETGTD…VLSKLKSLLQ (87 aa).

It belongs to the SCP family. Post-translationally, contains three disulfide bonds. Highly expressed in the buccal ganglion.

The protein localises to the secreted. In terms of biological role, involved in the stimulation of contractile activity in the gut, the increase of the amplitude of the heart beat, and enhancement of the contractile response of the radula closer muscle. This is Small cardioactive peptides from Aplysia californica (California sea hare).